The sequence spans 240 residues: UDP-2,3-diacylglucosamine hydrolase (240 aa).

Residues Asp-8, His-10, Asp-41, Asn-79, and His-114 each coordinate Mn(2+). 79–80 (NR) contributes to the substrate binding site. Asp-122, Ser-160, Asn-164, Lys-167, and His-195 together coordinate substrate. The Mn(2+) site is built by His-195 and His-197.

Belongs to the LpxH family. Mn(2+) is required as a cofactor.

Its subcellular location is the cell inner membrane. It is found in the cytoplasm. It catalyses the reaction UDP-2-N,3-O-bis[(3R)-3-hydroxytetradecanoyl]-alpha-D-glucosamine + H2O = 2-N,3-O-bis[(3R)-3-hydroxytetradecanoyl]-alpha-D-glucosaminyl 1-phosphate + UMP + 2 H(+). It participates in glycolipid biosynthesis; lipid IV(A) biosynthesis; lipid IV(A) from (3R)-3-hydroxytetradecanoyl-[acyl-carrier-protein] and UDP-N-acetyl-alpha-D-glucosamine: step 4/6. Its activity is regulated as follows. Inhibited by a sulfonyl piperazine compound that shows antibacterial activity against E.coli; LpxH is the cellular target of this compound. Inhibited by 0.01% (or more) Triton X-100 in vitro. In terms of biological role, hydrolyzes the pyrophosphate bond of UDP-2,3-diacylglucosamine to yield 2,3-diacylglucosamine 1-phosphate (lipid X) and UMP by catalyzing the attack of water at the alpha-P atom. Involved in the biosynthesis of lipid A, a phosphorylated glycolipid that anchors the lipopolysaccharide to the outer membrane of the cell. Is essential for E.coli growth. Does not cleave the unacylated UDP-GlcNAc, the mono-acylated UDP-3-O-(R)-3-hydroxymyristoyl-GlcNAc, and CDP-diacylglycerol. This Escherichia coli (strain K12) protein is UDP-2,3-diacylglucosamine hydrolase.